Reading from the N-terminus, the 311-residue chain is Aspartate carbamoyltransferase catalytic subunit (311 aa).

Positions 55 and 56 each coordinate carbamoyl phosphate. L-aspartate is bound at residue Lys-85. The carbamoyl phosphate site is built by Arg-106, His-135, and Gln-138. 2 residues coordinate L-aspartate: Arg-168 and Arg-230. 2 residues coordinate carbamoyl phosphate: Leu-268 and Pro-269.

Belongs to the aspartate/ornithine carbamoyltransferase superfamily. ATCase family. Heterododecamer (2C3:3R2) of six catalytic PyrB chains organized as two trimers (C3), and six regulatory PyrI chains organized as three dimers (R2).

It catalyses the reaction carbamoyl phosphate + L-aspartate = N-carbamoyl-L-aspartate + phosphate + H(+). It participates in pyrimidine metabolism; UMP biosynthesis via de novo pathway; (S)-dihydroorotate from bicarbonate: step 2/3. Functionally, catalyzes the condensation of carbamoyl phosphate and aspartate to form carbamoyl aspartate and inorganic phosphate, the committed step in the de novo pyrimidine nucleotide biosynthesis pathway. The sequence is that of Aspartate carbamoyltransferase catalytic subunit from Yersinia pseudotuberculosis serotype IB (strain PB1/+).